The following is a 219-amino-acid chain: Uracil-DNA glycosylase (219 aa).

Aspartate 64 serves as the catalytic Proton acceptor.

This sequence belongs to the uracil-DNA glycosylase (UDG) superfamily. UNG family.

The protein resides in the cytoplasm. It catalyses the reaction Hydrolyzes single-stranded DNA or mismatched double-stranded DNA and polynucleotides, releasing free uracil.. Functionally, excises uracil residues from the DNA which can arise as a result of misincorporation of dUMP residues by DNA polymerase or due to deamination of cytosine. The protein is Uracil-DNA glycosylase of Leuconostoc citreum (strain KM20).